The primary structure comprises 209 residues: Small ribosomal subunit protein uS4 (209 aa).

Positions 99-162 constitute an S4 RNA-binding domain; that stretch reads RRLDNVVYRL…RESNKFQEMK (64 aa).

Belongs to the universal ribosomal protein uS4 family. In terms of assembly, part of the 30S ribosomal subunit. Contacts protein S5. The interaction surface between S4 and S5 is involved in control of translational fidelity.

Functionally, one of the primary rRNA binding proteins, it binds directly to 16S rRNA where it nucleates assembly of the body of the 30S subunit. In terms of biological role, with S5 and S12 plays an important role in translational accuracy. The protein is Small ribosomal subunit protein uS4 of Syntrophomonas wolfei subsp. wolfei (strain DSM 2245B / Goettingen).